The chain runs to 118 residues: Large ribosomal subunit protein bL20 (118 aa).

It belongs to the bacterial ribosomal protein bL20 family.

In terms of biological role, binds directly to 23S ribosomal RNA and is necessary for the in vitro assembly process of the 50S ribosomal subunit. It is not involved in the protein synthesizing functions of that subunit. The polypeptide is Large ribosomal subunit protein bL20 (Fervidobacterium nodosum (strain ATCC 35602 / DSM 5306 / Rt17-B1)).